The chain runs to 181 residues: UPF0397 protein SSU98_0390 (181 aa).

5 consecutive transmembrane segments (helical) span residues 9–29, 46–66, 70–90, 108–128, and 147–167; these read VVATGIGAALFVVIGHLINIP, LLAVVFGPVVGFLVGFIGHTL, LTYGPWWSWILASGVFGLVVG, ILFFNLVQIAANVLAWGVIAP, and LVAGIANSITIAIAGTLLLVV.

The protein belongs to the UPF0397 family.

Its subcellular location is the cell membrane. The polypeptide is UPF0397 protein SSU98_0390 (Streptococcus suis (strain 98HAH33)).